The sequence spans 147 residues: MKVILLKDIKSVGKKGEVINVSDGYARNFLFPRKLAEEANNSNMRVLNLKKDAERKQKLQETEEAQKLANELKGKVLKLSAKAGENGRLFGAITSKDIAAEIKKQFNVDIDKKKVNSETIRKLGNYEIELKLYPEISTKINVLISEG.

This sequence belongs to the bacterial ribosomal protein bL9 family.

Binds to the 23S rRNA. This chain is Large ribosomal subunit protein bL9, found in Clostridium acetobutylicum (strain ATCC 824 / DSM 792 / JCM 1419 / IAM 19013 / LMG 5710 / NBRC 13948 / NRRL B-527 / VKM B-1787 / 2291 / W).